A 410-amino-acid chain; its full sequence is Na(+)-translocating NADH-quinone reductase subunit B (410 aa).

A run of 3 helical transmembrane segments spans residues 56-76 (MMIL…YNVG), 119-139 (LFGA…GGFW), and 159-179 (SILF…ALGI). An FMN phosphoryl threonine modification is found at T232. A run of 5 helical transmembrane segments spans residues 266–286 (GSIG…IVFA), 293–313 (IIAG…FIGS), 318–338 (MFAM…GMLF), 347–367 (SFTN…CVLI), and 377–397 (GMML…YFVA).

Belongs to the NqrB/RnfD family. Composed of six subunits; NqrA, NqrB, NqrC, NqrD, NqrE and NqrF. The cofactor is FMN.

Its subcellular location is the cell inner membrane. The enzyme catalyses a ubiquinone + n Na(+)(in) + NADH + H(+) = a ubiquinol + n Na(+)(out) + NAD(+). NQR complex catalyzes the reduction of ubiquinone-1 to ubiquinol by two successive reactions, coupled with the transport of Na(+) ions from the cytoplasm to the periplasm. NqrA to NqrE are probably involved in the second step, the conversion of ubisemiquinone to ubiquinol. The protein is Na(+)-translocating NADH-quinone reductase subunit B of Neisseria meningitidis serogroup B (strain ATCC BAA-335 / MC58).